A 189-amino-acid polypeptide reads, in one-letter code: Putative manganese efflux pump MntP (189 aa).

6 consecutive transmembrane segments (helical) span residues 3-23 (PISLLFLALAMSTDAFAAALG), 41-61 (LIFGAIETITPVIGWGIGQVA), 69-89 (DHWIAFTLLLVLGLHMIYNGI), 105-125 (FWILAVTAFATSIDALAVGVG), 133-153 (IVIAALAIGLATTVMVTIGVM), and 168-188 (IVGGIVLIIVGATILYEHLSA).

Belongs to the MntP (TC 9.B.29) family.

Its subcellular location is the cell inner membrane. Probably functions as a manganese efflux pump. In Pseudomonas savastanoi pv. phaseolicola (strain 1448A / Race 6) (Pseudomonas syringae pv. phaseolicola (strain 1448A / Race 6)), this protein is Putative manganese efflux pump MntP.